Reading from the N-terminus, the 23-residue chain is Alyteserin-1c (23 aa).

Position 23 is a serine amide (Ser-23).

Expressed by the skin glands.

The protein resides in the secreted. It localises to the target cell membrane. Antibacterial peptide with amphipathic alpha-helical structure that shows selective growth-inhibitory activity against Gram-negative bacteria but low hemolytic activity against human erythrocytes (LC(50)=145-220 uM). It is moderately active against the Gram-negative bacteria E.coli (MIC=25 uM), K.pneumoniae (MIC=50 uM), P.aeruginosa (MIC=25 uM), A.baumannii (MIC=6 uM), and is weaky active against the Gram-positive S.aureus (MIC=100-250 uM). The chain is Alyteserin-1c from Alytes obstetricans (Common midwife toad).